A 207-amino-acid chain; its full sequence is Adenine phosphoribosyltransferase (207 aa).

The disordered stretch occupies residues 1-33 (MRPAKPPQSKERKRSKSLTSADHDNSPQRAETA).

This sequence belongs to the purine/pyrimidine phosphoribosyltransferase family. Homodimer.

It localises to the cytoplasm. It carries out the reaction AMP + diphosphate = 5-phospho-alpha-D-ribose 1-diphosphate + adenine. Its pathway is purine metabolism; AMP biosynthesis via salvage pathway; AMP from adenine: step 1/1. In terms of biological role, catalyzes a salvage reaction resulting in the formation of AMP, that is energically less costly than de novo synthesis. The chain is Adenine phosphoribosyltransferase from Corynebacterium jeikeium (strain K411).